A 558-amino-acid polypeptide reads, in one-letter code: Suppressor of zyg-1 protein 20 (558 aa).

Positions Lys45–Tyr146 constitute an SUZ domain. 3 disordered regions span residues Glu50–Ala132, Phe205–Leu241, and Gln374–Gln558. Residues Glu69 to Asp81 are compositionally biased toward basic and acidic residues. The span at Pro94–Arg109 shows a compositional bias: polar residues. Residues Asn117–Gln131 show a composition bias toward basic and acidic residues. Low complexity-rich tracts occupy residues Gln374 to Gln394 and Asn424 to Gln477. Polar residues-rich tracts occupy residues Asn478 to Pro508 and Ser545 to Gln558.

As to quaternary structure, interacts (via C-terminus) with atx-2 (via C-terminus); the interaction is RNA independent. Interacts with let-92. Phosphorylated. May be dephosphorylated by let-92.

It is found in the cytoplasm. It localises to the cytoskeleton. Its subcellular location is the microtubule organizing center. The protein localises to the centrosome. The protein resides in the centriole. It is found in the nucleus. It localises to the nucleolus. Its subcellular location is the chromosome. RNA binding protein that is required for normal cell division and cytokinesis during embryonic development. Functions with RNA-binding protein atx-2 to ensure embryonic cell division, and to this end, plays a role in the regulation of centrosome assembly, position and size, and in astral microtubule outgrowth and nucleation. Furthermore, negatively regulates the levels of the protein kinase zyg-1 at the centrosome. Also involved in ensuring centrosome attachment to the nuclear envelope. The chain is Suppressor of zyg-1 protein 20 from Caenorhabditis elegans.